The primary structure comprises 98 residues: Putative pterin-4-alpha-carbinolamine dehydratase (98 aa).

Belongs to the pterin-4-alpha-carbinolamine dehydratase family.

It carries out the reaction (4aS,6R)-4a-hydroxy-L-erythro-5,6,7,8-tetrahydrobiopterin = (6R)-L-erythro-6,7-dihydrobiopterin + H2O. This Roseobacter denitrificans (strain ATCC 33942 / OCh 114) (Erythrobacter sp. (strain OCh 114)) protein is Putative pterin-4-alpha-carbinolamine dehydratase.